The primary structure comprises 176 residues: Tumor necrosis factor receptor superfamily member 23 (176 aa).

Positions 1-29 (MVTFSHVSSLSHWFLLLLLLNLFLPVIFA) are cleaved as a signal peptide. TNFR-Cys repeat units follow at residues 37 to 72 (NCPD…QGQC), 74 to 114 (KCHP…DRKC), and 115 to 155 (ECQI…NTVC). Cystine bridges form between Cys-38-Cys-49, Cys-50-Cys-63, Cys-53-Cys-72, Cys-75-Cys-90, Cys-93-Cys-106, Cys-96-Cys-114, Cys-116-Cys-131, Cys-134-Cys-147, and Cys-137-Cys-155. Asn-148 carries an N-linked (GlcNAc...) asparagine glycan. Cys-155 carries GPI-anchor amidated cysteine lipidation. A propeptide spans 156–176 (SSSVSNPRNWLFLLMLIVFCI) (removed in mature form).

As to expression, ubiquitous.

It localises to the cell membrane. Its function is as follows. Receptor for the cytotoxic ligand TRAIL. Lacks a cytoplasmic death domain and hence is not capable of inducing apoptosis. May protect cells against TRAIL mediated apoptosis through ligand competition. Cannot induce the NF-kappa-B pathway. The chain is Tumor necrosis factor receptor superfamily member 23 (Tnfrsf23) from Mus musculus (Mouse).